The chain runs to 218 residues: RNA polymerase sigma-H factor (218 aa).

Positions 62–75 match the Polymerase core binding motif; sequence DIVQEGMIGLYKSI. Residues 182–201 constitute a DNA-binding region (H-T-H motif); that stretch reads YQEISDELNRHVKSIDNALQ.

Belongs to the sigma-70 factor family. As to quaternary structure, interacts transiently with the RNAP core.

In terms of biological role, sigma factors are initiation factors that promote the attachment of RNA polymerase (RNAP) to specific initiation sites and are then released. This sigma factor is involved in the transition to post-exponential phase in the beginning of sporulation. It is also required for transcription of several stationary phase genes. Association with the RNAP core increases rapidly in early exponential phase, and reamins constant expression level after. This is RNA polymerase sigma-H factor (sigH) from Bacillus subtilis (strain 168).